The following is a 476-amino-acid chain: Cysteine--tRNA ligase (476 aa).

Cys29 serves as a coordination point for Zn(2+). Positions 31–41 (PTVYDYTHIGH) match the 'HIGH' region motif. Residues Cys209, His234, and Glu238 each coordinate Zn(2+). The 'KMSKS' region signature appears at 266-270 (KMSKS). Lys269 contributes to the ATP binding site.

This sequence belongs to the class-I aminoacyl-tRNA synthetase family. The cofactor is Zn(2+).

Its subcellular location is the cytoplasm. The catalysed reaction is tRNA(Cys) + L-cysteine + ATP = L-cysteinyl-tRNA(Cys) + AMP + diphosphate. The protein is Cysteine--tRNA ligase of Thermococcus kodakarensis (strain ATCC BAA-918 / JCM 12380 / KOD1) (Pyrococcus kodakaraensis (strain KOD1)).